Consider the following 393-residue polypeptide: Ornithine decarboxylase 2 (393 aa).

Lys-62 carries the N6-(pyridoxal phosphate)lysine modification. Pyridoxal 5'-phosphate-binding positions include Ser-194, Gly-231, and 265–268; that span reads EPGR. 314–315 is a substrate binding site; it reads YY. Residue Cys-343 is the Proton donor; shared with dimeric partner of the active site. Substrate is bound at residue Asp-344. Tyr-371 contacts pyridoxal 5'-phosphate.

This sequence belongs to the Orn/Lys/Arg decarboxylase class-II family. In terms of assembly, homodimer. Only the dimer is catalytically active, as the active sites are constructed of residues from both monomers. Pyridoxal 5'-phosphate is required as a cofactor.

The catalysed reaction is L-ornithine + H(+) = putrescine + CO2. Its pathway is amine and polyamine biosynthesis; putrescine biosynthesis via L-ornithine pathway; putrescine from L-ornithine: step 1/1. Its activity is regulated as follows. Inhibited by antizyme (AZ) in response to polyamine levels. AZ inhibits the assembly of the functional homodimer by binding to ODC monomers and targeting them for ubiquitin-independent proteolytic destruction by the 26S proteasome. Catalyzes the first and rate-limiting step of polyamine biosynthesis that converts ornithine into putrescine, which is the precursor for the polyamines, spermidine and spermine. Polyamines are essential for cell proliferation and are implicated in cellular processes, ranging from DNA replication to apoptosis. The polypeptide is Ornithine decarboxylase 2 (Odc2) (Drosophila melanogaster (Fruit fly)).